A 955-amino-acid chain; its full sequence is Reversion-inducing cysteine-rich protein with Kazal motifs (955 aa).

A signal peptide spans 1-22 (MSGCLQILTVLLCCRFWALVFS). One copy of the Knot 1 repeat lies at 28–75 (CVHHAADIPRCRDACEQLASIRSESRLRHLLHRLPSYCPETLSELWIC). The tract at residues 28–326 (CVHHAADIPR…NPVEMDLITC (299 aa)) is 5 X Knot repeats. Asn77 carries an N-linked (GlcNAc...) asparagine glycan. Knot repeat units lie at residues 95 to 132 (CCEL…LYSC) and 142 to 188 (CCSY…LILC). Asn191 carries N-linked (GlcNAc...) asparagine glycosylation. Knot repeat units lie at residues 207 to 254 (CCDR…LWQC) and 282 to 326 (CCFK…LITC). Residues Asn287 and Asn375 are each glycosylated (N-linked (GlcNAc...) asparagine). Kazal-like domains lie at 615 to 661 (LFTG…SCRS), 686 to 741 (DLSE…HCQD), and 742 to 778 (ACRR…RCHA). Cystine bridges form between Cys621–Cys646, Cys623–Cys642, Cys631–Cys659, Cys704–Cys724, and Cys713–Cys739. The GPI-anchor amidated serine moiety is linked to residue Ser931. A propeptide spanning residues 932–955 (SCVSISVCVLLLLCSLILTLTSDL) is cleaved from the precursor.

This sequence belongs to the RECK family. As to quaternary structure, interacts (via knot repeats) with wnt7a (via disordered linker region); the interaction is direct. Interacts (via knot repeats) with wnt7b (via disordered linker region); the interaction is direct. Interacts with adgra2; the interaction is direct. In terms of tissue distribution, expressed in the cerebral endothelium.

The protein localises to the cell membrane. Its function is as follows. Functions together with adgra2 to enable brain endothelial cells to selectively respond to Wnt7 signals (wnt7a or wnt7b). Plays a key role in Wnt7-specific responses: required for central nervous system (CNS) angiogenesis and blood-brain barrier regulation. Acts as a Wnt7-specific coactivator of canonical Wnt signaling by decoding Wnt ligands: acts by interacting specifically with the disordered linker region of Wnt7, thereby conferring ligand selectivity for Wnt7. Adgra2 is then required to deliver reck-bound Wnt7 to frizzled by assembling a higher-order RECK-ADGRA2-Fzd-LRP5-LRP6 complex. Also acts as a serine protease inhibitor. In Danio rerio (Zebrafish), this protein is Reversion-inducing cysteine-rich protein with Kazal motifs.